The sequence spans 64 residues: Conotoxin Im11.1 (64 aa).

Positions 1–26 are cleaved as a signal peptide; it reads MMFRLTSVSCFLLVIACLNLVVLTNA. Intrachain disulfides connect Cys-27/Cys-41, Cys-34/Cys-46, Cys-40/Cys-50, and Cys-45/Cys-54. An Asparagine amide modification is found at Asn-57. A propeptide spanning residues 61 to 64 is cleaved from the precursor; sequence ATFQ.

This sequence belongs to the conotoxin I2 superfamily. Expressed by the venom duct.

It localises to the secreted. The polypeptide is Conotoxin Im11.1 (Conus imperialis (Imperial cone)).